Here is a 348-residue protein sequence, read N- to C-terminus: D-erythrose-4-phosphate dehydrogenase (348 aa).

Residues 12–13 (RI) and Arg-81 contribute to the NAD(+) site. Substrate is bound by residues 154–156 (SCT), Arg-200, 213–214 (TK), and Arg-236. The active-site Nucleophile is Cys-155. An NAD(+)-binding site is contributed by Asn-318.

It belongs to the glyceraldehyde-3-phosphate dehydrogenase family. Epd subfamily. As to quaternary structure, homotetramer.

It is found in the cytoplasm. The enzyme catalyses D-erythrose 4-phosphate + NAD(+) + H2O = 4-phospho-D-erythronate + NADH + 2 H(+). Its pathway is cofactor biosynthesis; pyridoxine 5'-phosphate biosynthesis; pyridoxine 5'-phosphate from D-erythrose 4-phosphate: step 1/5. Functionally, catalyzes the NAD-dependent conversion of D-erythrose 4-phosphate to 4-phosphoerythronate. The sequence is that of D-erythrose-4-phosphate dehydrogenase from Salmonella gallinarum (strain 287/91 / NCTC 13346).